We begin with the raw amino-acid sequence, 257 residues long: Probable 6-phosphogluconolactonase (257 aa).

This sequence belongs to the glucosamine/galactosamine-6-phosphate isomerase family. 6-phosphogluconolactonase subfamily.

The enzyme catalyses 6-phospho-D-glucono-1,5-lactone + H2O = 6-phospho-D-gluconate + H(+). It functions in the pathway carbohydrate degradation; pentose phosphate pathway; D-ribulose 5-phosphate from D-glucose 6-phosphate (oxidative stage): step 2/3. In terms of biological role, hydrolysis of 6-phosphogluconolactone to 6-phosphogluconate. This is Probable 6-phosphogluconolactonase from Schizosaccharomyces pombe (strain 972 / ATCC 24843) (Fission yeast).